The sequence spans 161 residues: Xanthine-guanine phosphoribosyltransferase (161 aa).

5-phospho-alpha-D-ribose 1-diphosphate contacts are provided by residues 41–42 (RG) and 95–103 (DDLVDTGNT). Asp-96 provides a ligand contact to Mg(2+). Residues Asp-99 and Ile-142 each contribute to the guanine site. Xanthine contacts are provided by Asp-99 and Ile-142. Residues 99 to 103 (DTGNT) and 141 to 142 (WI) contribute to the GMP site.

It belongs to the purine/pyrimidine phosphoribosyltransferase family. XGPT subfamily. In terms of assembly, homotetramer. Mg(2+) is required as a cofactor.

Its subcellular location is the cell inner membrane. The enzyme catalyses GMP + diphosphate = guanine + 5-phospho-alpha-D-ribose 1-diphosphate. It carries out the reaction XMP + diphosphate = xanthine + 5-phospho-alpha-D-ribose 1-diphosphate. The catalysed reaction is IMP + diphosphate = hypoxanthine + 5-phospho-alpha-D-ribose 1-diphosphate. It participates in purine metabolism; GMP biosynthesis via salvage pathway; GMP from guanine: step 1/1. The protein operates within purine metabolism; XMP biosynthesis via salvage pathway; XMP from xanthine: step 1/1. Purine salvage pathway enzyme that catalyzes the transfer of the ribosyl-5-phosphate group from 5-phospho-alpha-D-ribose 1-diphosphate (PRPP) to the N9 position of the 6-oxopurines guanine and xanthine to form the corresponding ribonucleotides GMP (guanosine 5'-monophosphate) and XMP (xanthosine 5'-monophosphate), with the release of PPi. To a lesser extent, also acts on hypoxanthine. The chain is Xanthine-guanine phosphoribosyltransferase from Idiomarina loihiensis (strain ATCC BAA-735 / DSM 15497 / L2-TR).